Consider the following 113-residue polypeptide: Flagellar hook-basal body complex protein FliE (113 aa).

It belongs to the FliE family.

It localises to the bacterial flagellum basal body. The protein is Flagellar hook-basal body complex protein FliE of Rhizobium etli (strain ATCC 51251 / DSM 11541 / JCM 21823 / NBRC 15573 / CFN 42).